A 189-amino-acid chain; its full sequence is HTH-type transcriptional repressor AcnR (189 aa).

Residues 10-70 (AERKVEILSG…EVAHEDMRKM (61 aa)) enclose the HTH tetR-type domain. The H-T-H motif DNA-binding region spans 33–52 (TVARLEETIGKSRGAIFHHY). Residues 79–80 (LI), R130, and Q134 each bind citrate. E181 provides a ligand contact to Mg(2+). Citrate is bound at residue R185.

As to quaternary structure, homodimer.

In terms of biological role, acnR negatively controls the expression of the aconitase gene acn. The protein is HTH-type transcriptional repressor AcnR of Corynebacterium jeikeium (strain K411).